A 566-amino-acid chain; its full sequence is Tissue-type plasminogen activator (566 aa).

The signal sequence occupies residues 1–21 (MMSAMKTEFLCVLLLCGAVFT). Residues 22 to 33 (SPSQETYRRLRR) constitute a propeptide that is removed on maturation. Positions 34 to 36 (GAR) are cleaved as a propeptide — removed by plasmin. The Fibronectin type-I domain maps to 40 to 82 (VTCRDGKTQMTYRQHDSWLRPLLRGNQVEHCWCDGGRAQCHSV). 17 cysteine pairs are disulfide-bonded: C42–C72, C70–C79, C87–C98, C92–C109, C111–C120, C128–C209, C149–C191, C180–C204, C219–C300, C240–C282, C271–C295, C303–C434, C346–C362, C354–C423, C448–C523, C480–C496, and C513–C541. Residues 43–53 (RDGKTQMTYRQ) form an important for binding to annexin A2 region. An EGF-like domain is found at 83–121 (PVRSCSEPWCFNGGTCRQALYSSDFVCQCPEGFMGKLCE). 2 consecutive Kringle domains span residues 128 to 209 (CYKD…TPAC) and 219 to 300 (CYTG…VPQC). A glycan (N-linked (GlcNAc...) asparagine) is linked at N153. The 251-residue stretch at 315-565 (IKGGLFADIT…YLDWIRDNTR (251 aa)) folds into the Peptidase S1 domain. Catalysis depends on charge relay system residues H361 and D410. N487 is a glycosylation site (N-linked (GlcNAc...) asparagine). S517 acts as the Charge relay system in catalysis.

Belongs to the peptidase S1 family. Heterodimer of chain A and chain B held by a disulfide bond. Binds to fibrin with high affinity. This interaction leads to an increase in the catalytic efficiency of the enzyme due to an increase in affinity for plasminogen. Similarly, binding to heparin increases the activation of plasminogen. Binds to annexin A2, cytokeratin-8, fibronectin and laminin. Binds to mannose receptor and the low-density lipoprotein receptor-related protein (LRP1); these proteins are involved in TPA clearance. Binds LRP1B; binding is followed by internalization and degradation. Forms heterodimer with SERPINA5. Interacts with SERPINE1. In complex with SERPINE1, interacts with SORL1. Post-translationally, the single chain, almost fully active enzyme, can be further processed into a two-chain fully active form by a cleavage after Arg-314 catalyzed by plasmin, tissue kallikrein or factor Xa.

The protein localises to the secreted. The protein resides in the extracellular space. The catalysed reaction is Specific cleavage of Arg-|-Val bond in plasminogen to form plasmin.. Its activity is regulated as follows. Inhibited by SERPINA5. Inhibited by SERPINE1. Its function is as follows. Converts the abundant, but inactive, zymogen plasminogen to plasmin by hydrolyzing a single Arg-Val bond in plasminogen. By controlling plasmin-mediated proteolysis, it plays an important role in tissue remodeling and degradation, in cell migration and many other physiopathological events. During oocyte activation, plays a role in cortical granule reaction in the zona reaction, which contributes to the block to polyspermy. The sequence is that of Tissue-type plasminogen activator (PLAT) from Bos taurus (Bovine).